The sequence spans 276 residues: Diaminopimelate epimerase (276 aa).

Substrate is bound by residues N13, Q46, and N66. The active-site Proton donor is C75. Substrate contacts are provided by residues 76 to 77 (GN), N159, N192, and 210 to 211 (ER). C219 serves as the catalytic Proton acceptor. 220 to 221 (GT) contributes to the substrate binding site.

Belongs to the diaminopimelate epimerase family. As to quaternary structure, homodimer.

It is found in the cytoplasm. It carries out the reaction (2S,6S)-2,6-diaminopimelate = meso-2,6-diaminopimelate. Its pathway is amino-acid biosynthesis; L-lysine biosynthesis via DAP pathway; DL-2,6-diaminopimelate from LL-2,6-diaminopimelate: step 1/1. In terms of biological role, catalyzes the stereoinversion of LL-2,6-diaminopimelate (L,L-DAP) to meso-diaminopimelate (meso-DAP), a precursor of L-lysine and an essential component of the bacterial peptidoglycan. This is Diaminopimelate epimerase from Pseudomonas aeruginosa (strain UCBPP-PA14).